The chain runs to 530 residues: 2,3-bisphosphoglycerate-independent phosphoglycerate mutase (530 aa).

Mn(2+)-binding residues include Asp15 and Ser65. Ser65 (phosphoserine intermediate) is an active-site residue. Residues His126, 155 to 156 (RD), Arg187, Arg193, 257 to 260 (RPDR), and Lys330 each bind substrate. The Mn(2+) site is built by Asp397, His401, Asp438, His439, and His456.

The protein belongs to the BPG-independent phosphoglycerate mutase family. As to quaternary structure, monomer. Requires Mn(2+) as cofactor.

The catalysed reaction is (2R)-2-phosphoglycerate = (2R)-3-phosphoglycerate. It participates in carbohydrate degradation; glycolysis; pyruvate from D-glyceraldehyde 3-phosphate: step 3/5. Functionally, catalyzes the interconversion of 2-phosphoglycerate and 3-phosphoglycerate. In Synechococcus sp. (strain JA-3-3Ab) (Cyanobacteria bacterium Yellowstone A-Prime), this protein is 2,3-bisphosphoglycerate-independent phosphoglycerate mutase.